We begin with the raw amino-acid sequence, 282 residues long: Glycine/sarcosine N-methyltransferase (282 aa).

The span at 1-23 shows a compositional bias: polar residues; sequence MTSTQNHPLQTQDDQQRFGQSPE. Residues 1–27 are disordered; that stretch reads MTSTQNHPLQTQDDQQRFGQSPESVRE. Residues Tyr-35, Trp-43, Arg-52, Ala-76, Asp-97, 123-124, and Leu-141 contribute to the S-adenosyl-L-methionine site; that span reads DW. 3 residues coordinate substrate: Asn-143, Arg-176, and Tyr-217.

This sequence belongs to the class I-like SAM-binding methyltransferase superfamily. Glycine N-methyltransferase family. Monomer.

It catalyses the reaction glycine + 2 S-adenosyl-L-methionine = N,N-dimethylglycine + 2 S-adenosyl-L-homocysteine + 2 H(+). The catalysed reaction is glycine + S-adenosyl-L-methionine = sarcosine + S-adenosyl-L-homocysteine + H(+). The enzyme catalyses sarcosine + S-adenosyl-L-methionine = N,N-dimethylglycine + S-adenosyl-L-homocysteine + H(+). It functions in the pathway amine and polyamine biosynthesis; betaine biosynthesis via glycine pathway; betaine from glycine: step 1/3. Its pathway is amine and polyamine biosynthesis; betaine biosynthesis via glycine pathway; betaine from glycine: step 2/3. Catalyzes the methylation of glycine and sarcosine to sarcosine and dimethylglycine, respectively, with S-adenosylmethionine (AdoMet) acting as the methyl donor. It has strict specificity for glycine and sarcosine as the methyl group acceptors. The sequence is that of Glycine/sarcosine N-methyltransferase from Parasynechococcus marenigrum (strain WH8102).